The chain runs to 236 residues: 2,3,4,5-tetrahydropyridine-2,6-dicarboxylate N-acetyltransferase (236 aa).

The protein belongs to the transferase hexapeptide repeat family. DapH subfamily.

It catalyses the reaction (S)-2,3,4,5-tetrahydrodipicolinate + acetyl-CoA + H2O = L-2-acetamido-6-oxoheptanedioate + CoA. It participates in amino-acid biosynthesis; L-lysine biosynthesis via DAP pathway; LL-2,6-diaminopimelate from (S)-tetrahydrodipicolinate (acetylase route): step 1/3. In terms of biological role, catalyzes the transfer of an acetyl group from acetyl-CoA to tetrahydrodipicolinate. This Lactobacillus helveticus (strain DPC 4571) protein is 2,3,4,5-tetrahydropyridine-2,6-dicarboxylate N-acetyltransferase.